The following is a 335-amino-acid chain: MKTILAVETSCDETAVAIVNSDKQVLAHEILSQAEHKKRGGVIPEIASRAHMEHLSGLIKSAVEKSNLNFCDLNAIAATSGPGLIGGLIVGTMMAKAIAHVAQKPFIAVNHLEAHALVIRLLHEVKFPFLVLLISGGHCQFLIAQDVGKYIKLGETLDDSLGEAFDKVAKMLGLSYPGGPLIEKLAKKGNGARFKLPRAMIKRYGCNFSFSGIKTAVKNLVQELKMSEQDVCDVCASFQECISDILLDRVSNAIIMAESLNIKINDFVITGGVAANNFLREKLKQHINLNIFFPPNDLCTDNAIMVGWTGIERLQKNYIDPLNFAPRPKWELESY.

Fe cation contacts are provided by H111 and H115. Residues 133–137, D166, G179, and N276 each bind substrate; that span reads LISGG. D301 is a binding site for Fe cation.

This sequence belongs to the KAE1 / TsaD family. Fe(2+) is required as a cofactor.

Its subcellular location is the cytoplasm. It carries out the reaction L-threonylcarbamoyladenylate + adenosine(37) in tRNA = N(6)-L-threonylcarbamoyladenosine(37) in tRNA + AMP + H(+). Required for the formation of a threonylcarbamoyl group on adenosine at position 37 (t(6)A37) in tRNAs that read codons beginning with adenine. Is involved in the transfer of the threonylcarbamoyl moiety of threonylcarbamoyl-AMP (TC-AMP) to the N6 group of A37, together with TsaE and TsaB. TsaD likely plays a direct catalytic role in this reaction. The protein is tRNA N6-adenosine threonylcarbamoyltransferase of Wolbachia sp. subsp. Drosophila simulans (strain wRi).